We begin with the raw amino-acid sequence, 84 residues long: Toxin BmKaTx16 (84 aa).

Positions 1 to 19 are cleaved as a signal peptide; sequence MNYLVMISFALLLMTGVES. Positions 21 to 83 constitute an LCN-type CS-alpha/beta domain; the sequence is RDAYIAKPHN…VPIRVPGKCH (63 aa). 4 disulfides stabilise this stretch: C31/C82, C35/C55, C41/C65, and C45/C67. R84 is a propeptide (removed by a carboxypeptidase).

The protein belongs to the long (4 C-C) scorpion toxin superfamily. Sodium channel inhibitor family. Alpha subfamily. In terms of tissue distribution, expressed by the venom gland.

It is found in the secreted. Its function is as follows. Alpha toxins bind voltage-independently at site-3 of sodium channels (Nav) and inhibit the inactivation of the activated channels, thereby blocking neuronal transmission. The chain is Toxin BmKaTx16 from Olivierus martensii (Manchurian scorpion).